The sequence spans 157 residues: SsrA-binding protein (157 aa).

The protein belongs to the SmpB family.

It localises to the cytoplasm. In terms of biological role, required for rescue of stalled ribosomes mediated by trans-translation. Binds to transfer-messenger RNA (tmRNA), required for stable association of tmRNA with ribosomes. tmRNA and SmpB together mimic tRNA shape, replacing the anticodon stem-loop with SmpB. tmRNA is encoded by the ssrA gene; the 2 termini fold to resemble tRNA(Ala) and it encodes a 'tag peptide', a short internal open reading frame. During trans-translation Ala-aminoacylated tmRNA acts like a tRNA, entering the A-site of stalled ribosomes, displacing the stalled mRNA. The ribosome then switches to translate the ORF on the tmRNA; the nascent peptide is terminated with the 'tag peptide' encoded by the tmRNA and targeted for degradation. The ribosome is freed to recommence translation, which seems to be the essential function of trans-translation. This chain is SsrA-binding protein, found in Lacticaseibacillus paracasei (strain ATCC 334 / BCRC 17002 / CCUG 31169 / CIP 107868 / KCTC 3260 / NRRL B-441) (Lactobacillus paracasei).